A 1075-amino-acid polypeptide reads, in one-letter code: Protein nervous wreck (1075 aa).

The 279-residue stretch at 11–289 (VKFLKNLHTE…QAQQLTREYN (279 aa)) folds into the F-BAR domain. Disordered stretches follow at residues 361 to 381 (LRDS…LDTK) and 431 to 536 (SASS…DEPI). Residues 431–453 (SASSISMRTDASGQGENPSSDSF) show a composition bias toward polar residues. The segment covering 469–482 (PKQEQQLSRDRTFS) has biased composition (basic and acidic residues). Residues 493–512 (SAAAASSAAAASSSMMASSA) are compositionally biased toward low complexity. SH3 domains lie at 542 to 603 (EAIF…IDQE) and 658 to 721 (SDVE…ECDE). Disordered regions lie at residues 722–747 (MGEP…LPPA), 769–837 (SQDT…EKGA), and 864–917 (GADK…EGNA). 2 stretches are compositionally biased toward pro residues: residues 733–747 (SPPP…LPPA) and 809–818 (QPPPSLPPPQ). Residues 819 to 837 (LAKAGGSAPGSGSKVEKGA) show a composition bias toward low complexity. The segment covering 883–897 (VSKEQPAEVAKKPDI) has biased composition (basic and acidic residues).

As to quaternary structure, homodimer. Interacts (via SH3 domain 1) with WASp. Interacts (via SH3 domain 1) with shi/dynamin. Interacts (via SH3 domain 2) with Dap160. Interacts (via F-BAR domain) with SH3PX1. Interacts (via SH3 domain 2) with Snx16. Identified in a complex with Syn and Syt1. In terms of tissue distribution, detected in larval body wall muscle. Detected at the neuromuscular junction, on motoneuron axons and axon terminals, at synaptic boutons in the periactive zone surrounding the synapse (at protein level). Detected on motoneuron axons and axon terminals, at synaptic boutons in the periactive zone surrounding the synapse.

It is found in the endomembrane system. Its subcellular location is the synapse. The protein localises to the cell projection. The protein resides in the axon. It localises to the presynaptic cell membrane. It is found in the cytoplasmic vesicle. Its subcellular location is the secretory vesicle. The protein localises to the synaptic vesicle. The protein resides in the recycling endosome. Its function is as follows. Adapter protein that provides a link between vesicular membrane traffic and the actin assembly machinery. Acts together with Cdc42 to stimulate actin nucleation mediated by WASp and the ARP2/3 complex. Binds to membranes enriched in phosphatidylinositol 4,5-bisphosphate and causes local membrane deformation. Required for normal structure and function of synapses at the neuromuscular junction. Plays a role in synaptic vesicle trafficking. Required for the release of a normal number of synaptic vesicles per action potential. The chain is Protein nervous wreck from Drosophila melanogaster (Fruit fly).